Here is a 96-residue protein sequence, read N- to C-terminus: Large ribosomal subunit protein uL23 (96 aa).

The protein belongs to the universal ribosomal protein uL23 family. In terms of assembly, part of the 50S ribosomal subunit. Contacts protein L29, and trigger factor when it is bound to the ribosome.

In terms of biological role, one of the early assembly proteins it binds 23S rRNA. One of the proteins that surrounds the polypeptide exit tunnel on the outside of the ribosome. Forms the main docking site for trigger factor binding to the ribosome. The polypeptide is Large ribosomal subunit protein uL23 (Vesicomyosocius okutanii subsp. Calyptogena okutanii (strain HA)).